Reading from the N-terminus, the 410-residue chain is Translation initiation factor 2 subunit gamma (410 aa).

The tr-type G domain maps to 6–203 (QSEVNIGMVG…AIQDFIPTPE (198 aa)). The tract at residues 15–22 (GHVDHGKT) is G1. D18, T22, G43, and S45 together coordinate Mg(2+). Position 18–23 (18–23 (DHGKTS)) interacts with GTP. A G2 region spans residues 43-47 (GISIR). Zn(2+) contacts are provided by C58, C61, C73, and C76. The interval 90-93 (DAPG) is G3. GTP-binding positions include 146-149 (NKID) and 181-183 (SAH). Residues 146 to 149 (NKID) form a G4 region. Positions 181–183 (SAH) are G5.

This sequence belongs to the TRAFAC class translation factor GTPase superfamily. Classic translation factor GTPase family. EIF2G subfamily. Heterotrimer composed of an alpha, a beta and a gamma chain. The cofactor is Mg(2+).

The catalysed reaction is GTP + H2O = GDP + phosphate + H(+). EIF-2 functions in the early steps of protein synthesis by forming a ternary complex with GTP and initiator tRNA. The protein is Translation initiation factor 2 subunit gamma of Methanococcus maripaludis (strain DSM 14266 / JCM 13030 / NBRC 101832 / S2 / LL).